We begin with the raw amino-acid sequence, 68 residues long: UPF0434 protein BURPS668_0926 (68 aa).

This sequence belongs to the UPF0434 family.

The sequence is that of UPF0434 protein BURPS668_0926 from Burkholderia pseudomallei (strain 668).